Consider the following 473-residue polypeptide: MQPFVLYNSEQRKKVEFVPRKEGHIDMYVCGMTVYDYCHIGHARVMVAFDYIIRFLRSQGWKVRYIRNITDIDDKIIKRANENGETIQQLTMRFIDAMNEDAANLGCLAPDEAPKATEYIDQMQNMIGNLVNKGAAYPASNGDVYFEVTKFEKYGRLSGRKLDDMQAGASERVDVEVEKKHPFDFVLWKHAKENEPSWASPWGNGRPGWHIECSAMSTCCLGNHFDIHGGGSDLMFPHHENEIAQSEASTGEQYVNYWIHVGFINVDGEKMSKSLGNFFTIRDVMEKFHPEVIRYFIVSSHYRSPVNFSDVALKEAKTSLTRFYHSFKAYQQVYGQTTTETLDQSFVERFNNAMCDDFNTAEAMAVLFELNKELNRAVKEEQADQATVLYSTLRHLTNILGLVQHNVDDFLKSDIGQEALALSDAEIEDFIQQRVDAKKAKDFAKADSIRQSLLEQGVVLEDTRQGTVWRRAD.

Cys30 contacts Zn(2+). The short motif at 32-42 (MTVYDYCHIGH) is the 'HIGH' region element. Positions 213, 238, and 242 each coordinate Zn(2+). Positions 270-274 (KMSKS) match the 'KMSKS' region motif. Lys273 is a binding site for ATP.

The protein belongs to the class-I aminoacyl-tRNA synthetase family. Monomer. It depends on Zn(2+) as a cofactor.

The protein resides in the cytoplasm. The enzyme catalyses tRNA(Cys) + L-cysteine + ATP = L-cysteinyl-tRNA(Cys) + AMP + diphosphate. The sequence is that of Cysteine--tRNA ligase from Acinetobacter baumannii (strain SDF).